Consider the following 203-residue polypeptide: ATP-dependent Clp protease proteolytic subunit 1 (203 aa).

The active-site Nucleophile is the Ser103. Residue His128 is part of the active site.

It belongs to the peptidase S14 family. In terms of assembly, fourteen ClpP subunits assemble into 2 heptameric rings which stack back to back to give a disk-like structure with a central cavity, resembling the structure of eukaryotic proteasomes.

The protein localises to the cytoplasm. The catalysed reaction is Hydrolysis of proteins to small peptides in the presence of ATP and magnesium. alpha-casein is the usual test substrate. In the absence of ATP, only oligopeptides shorter than five residues are hydrolyzed (such as succinyl-Leu-Tyr-|-NHMec, and Leu-Tyr-Leu-|-Tyr-Trp, in which cleavage of the -Tyr-|-Leu- and -Tyr-|-Trp bonds also occurs).. Functionally, cleaves peptides in various proteins in a process that requires ATP hydrolysis. Has a chymotrypsin-like activity. Plays a major role in the degradation of misfolded proteins. This is ATP-dependent Clp protease proteolytic subunit 1 from Treponema pallidum (strain Nichols).